A 304-amino-acid chain; its full sequence is Peptidyl-prolyl cis-trans isomerase FKBP35 (304 aa).

Residues 37 to 126 (GNEVTVHYVG…LFEIELLSFR (90 aa)) form the PPIase FKBP-type domain. TPR repeat units lie at residues 144–177 (AFDI…FIHT), 194–227 (ISCN…DKNN), and 228–261 (VKAL…NPNN).

The protein belongs to the FKBP-type PPIase family. In terms of assembly, homodimer. Interacts (via TPR repeats) with HSP90 (probably via MEEVD motif).

Its subcellular location is the cytoplasm. It localises to the nucleus. It carries out the reaction [protein]-peptidylproline (omega=180) = [protein]-peptidylproline (omega=0). Its activity is regulated as follows. Inhibited by FK506 and its derivates, such as ascomycin, and rapamycin. FK506 and rapamycin inhibit peptidylprolyl isomerase activity but not chaperone activity. Inhibited by N-(2-ethyl-phenyl)-2-(3H-imidazao [4, 5-b] pyridin-2-yl-sulfanyl)-acetamide (D44). Not inhibited by cyclosporin A. Inhibition of calcineurin phosphatase activity is enhanced by FK506. Has peptidylprolyl isomerase (PPIase) and co-chaperone activities. Assists protein folding by catalyzing the peptidyl conversion of cis and trans rotamers of the prolyl amide bond of protein substrates. Inhibits calcineurin phosphatase activity in vitro. Plays an essential role in merozoite egress from host erythrocytes. The protein is Peptidyl-prolyl cis-trans isomerase FKBP35 of Plasmodium falciparum (isolate 3D7).